Here is a 59-residue protein sequence, read N- to C-terminus: Large ribosomal subunit protein bL32c (59 aa).

A disordered region spans residues S37–K59.

This sequence belongs to the bacterial ribosomal protein bL32 family.

Its subcellular location is the plastid. It is found in the chloroplast. This chain is Large ribosomal subunit protein bL32c, found in Hordeum vulgare (Barley).